Reading from the N-terminus, the 341-residue chain is Transcription factor VIP1 (341 aa).

Disordered regions lie at residues 1–33 (MEGG…HRRA), 59–106 (SLDF…PEAR), and 135–156 (SSGE…DGEM). A necessary and sufficient for transient T-DNA transformation end expression region spans residues 1–162 (MEGGGRGPNQ…DGEMSSASFN (162 aa)). Residues 15–24 (EIEHMPEAPR) are compositionally biased toward basic and acidic residues. The span at 71 to 80 (QSQQQPQASP) shows a compositional bias: low complexity. A Phosphoserine modification is found at serine 79. The tract at residues 163 to 341 (IESILASVSG…PSYMDFTKRG (179 aa)) is involved in homomultimerization and histone H2A binding. In terms of domain architecture, bZIP spans 194-257 (DPKRAKRILA…SELNTENKHL (64 aa)). The tract at residues 196 to 217 (KRAKRILANRQSAARSKERKIR) is basic motif. A Nuclear localization signal motif is present at residues 198–205 (AKRILANR). The leucine-zipper stretch occupies residues 222–257 (LERKVQTLQNEATTLSAQVTMLQRGTSELNTENKHL). Over residues 307–331 (SQQSAMNQFGNKTNQQMSTNGQPSL) the composition is skewed to polar residues. Positions 307-341 (SQQSAMNQFGNKTNQQMSTNGQPSLPSYMDFTKRG) are disordered.

This sequence belongs to the bZIP family. As to quaternary structure, forms homomultimers. Interacts with Agrobacterium tumefaciens VirE2 and mediates its translocation to the host nucleus. Binds to VIP2. Forms a complex made of Agrobacterium VirE2, VIP1, VIP2 and single-stranded DNA (ssDNA). The interaction with KAP1 mediates its nuclear import. Binds to the H2A histone RAT5. Interacts with MPK3 and Agrobacterium virF. Forms a complex made of VIP1, VBF and Agrobacterium virE2. Interacts with SCF(VBF) E3 ubiquitin ligase complex. Binds directly to VBF. Forms heterodimers with BZIP34 and BZIP61. In terms of processing, phosphorylated by MPK3. This phosphorylation promotes nuclear localization. As to expression, mostly expressed in dividing cells, present in leaves, roots and seedlings.

Its subcellular location is the cytoplasm. It is found in the nucleus. In terms of biological role, transcription activator that binds specifically to the VIP1 response elements (VREs) DNA sequence 5'-ACNGCT-3' found in some stress genes (e.g. TRX8 and MYB44), when phosphorylated/activated by MPK3. Required for Agrobacterium VirE2 nuclear import and tumorigenicity. Promotes transient expression of T-DNA in early stages by interacting with VirE2 in complex with the T-DNA and facilitating its translocation to the nucleus, and mediates stable genetic transformation by Agrobacterium by binding H2A histone. Prevents cell differentiation and shoot formation. Limits sulfate utilization efficiency (SUE) and sulfate uptake, especially in low-sulfur conditions. Plays a role in osmosensory response by binding to the 5'-AGCTGT/G-3' DNA sequence found in the promoters of the hypoosmolarity-responsive genes CYP707A1 and CYP707A3. Involved in the negative regulation of touch-induced root bending and salt-dependent root bending. The polypeptide is Transcription factor VIP1 (Arabidopsis thaliana (Mouse-ear cress)).